The sequence spans 349 residues: Phosphoribosylformylglycinamidine cyclo-ligase (349 aa).

It belongs to the AIR synthase family.

It is found in the cytoplasm. The enzyme catalyses 2-formamido-N(1)-(5-O-phospho-beta-D-ribosyl)acetamidine + ATP = 5-amino-1-(5-phospho-beta-D-ribosyl)imidazole + ADP + phosphate + H(+). It functions in the pathway purine metabolism; IMP biosynthesis via de novo pathway; 5-amino-1-(5-phospho-D-ribosyl)imidazole from N(2)-formyl-N(1)-(5-phospho-D-ribosyl)glycinamide: step 2/2. The protein is Phosphoribosylformylglycinamidine cyclo-ligase of Albidiferax ferrireducens (strain ATCC BAA-621 / DSM 15236 / T118) (Rhodoferax ferrireducens).